The following is a 339-amino-acid chain: Meiotic recombination protein rec7 (339 aa).

Its function is as follows. May be involved primarily in the early steps of meiotic recombination. This Schizosaccharomyces pombe (strain 972 / ATCC 24843) (Fission yeast) protein is Meiotic recombination protein rec7 (rec7).